The primary structure comprises 405 residues: G1/S-specific cyclin-D (405 aa).

In terms of domain architecture, Cyclin N-terminal spans 76 to 200 (FYNCMEYEEA…LIVTTLQWET (125 aa)). The disordered stretch occupies residues 301-405 (YTSEDAEKTE…STPPKIFKTL (105 aa)). A compositionally biased stretch (polar residues) spans 311-321 (PTPSAPASTQE). The span at 326-335 (QELKELKEEP) shows a compositional bias: basic and acidic residues. Positions 358 to 380 (SEQTPSTPLNDSGFSSDVSSPAS) are enriched in polar residues.

Belongs to the cyclin family. Cyclin D subfamily. In terms of assembly, interacts with cdk-4; the interaction is likely involved in regulating cdk-4 activity.

Functionally, in association with cdk-4, regulates the progression through the G1 phase of the cell cycle during postembryonic development. Regulates proliferation of the coelomocyte lineage and intestinal cells during late embryogenesis. In complex with cdk-4, involved in sex determination during gonadogenesis by regulating the asymmetric division of the somatic gonadal precursor cell (SGP). This Caenorhabditis elegans protein is G1/S-specific cyclin-D.